The chain runs to 386 residues: MADMNQHPTVFQKAANQLDLRSSLSQDVHARYGGVQPAIYQRHFAYGNYSNAGLQRGQATQDLSLITSNASPVFVQAPQEKGFAAFATDFLMGGVSAAVSKTAAAPIERVKLLIQNQDEMLKAGRLSEPYKGIGECFGRTIKEEGFGSLWRGNTANVIRYFPTQALNFAFKDYFKRLFNFKKDRDGYWKWFAGNLASGGAAGASSLFFVYSLDYARTRLANDRKASKKGGERQFNGLVDVYKKTLKSDGIAGLYRGFNISCVGIIVYRGLYFGMYDSLKPVLLTGNLQDSFFASFGLGWLITNGAGLASYPIDTVRRRMMMTSGEAVKYKSSLDAFSQIVKNEGPKSLFKGAGANILRAVAGAGVLAGYDKLQVLVLGKKFGSGGA.

The N-terminal 77 residues, 1–77 (MADMNQHPTV…SNASPVFVQA (77 aa)), are a transit peptide targeting the mitochondrion. 3 Solcar repeats span residues 84 to 177 (AAFA…FKRL), 189 to 281 (KWFA…LKPV), and 289 to 375 (DSFF…LQVL). Helical transmembrane passes span 86–113 (FATD…VKLL), 154–178 (TANV…KRLF), 187–207 (YWKW…SSLF), 257–278 (FNIS…YDSL), and 292–312 (FASF…SYPI). Positions 159 and 171 each coordinate ADP. ADP is bound at residue Arg-316. Positions 316 to 321 (RRRMMM) are important for transport activity. The short motif at 316–321 (RRRMMM) is the Nucleotide carrier signature motif element. The helical transmembrane segment at 352-372 (AGANILRAVAGAGVLAGYDKL) threads the bilayer.

It belongs to the mitochondrial carrier (TC 2.A.29) family. As to quaternary structure, monomer.

It is found in the mitochondrion inner membrane. It catalyses the reaction ADP(in) + ATP(out) = ADP(out) + ATP(in). Its activity is regulated as follows. The matrix-open state (m-state) is inhibited by the membrane-permeable bongkrekic acid (BKA). The cytoplasmic-open state (c-state) is inhibited by the membrane-impermeable toxic inhibitor carboxyatractyloside (CATR). Its function is as follows. ADP:ATP antiporter that mediates import of ADP into the mitochondrial matrix for ATP synthesis, and export of ATP out to fuel the cell. Cycles between the cytoplasmic-open state (c-state) and the matrix-open state (m-state): operates by the alternating access mechanism with a single substrate-binding site intermittently exposed to either the cytosolic (c-state) or matrix (m-state) side of the inner mitochondrial membrane. The sequence is that of ADP,ATP carrier protein, mitochondrial (ANT) from Solanum tuberosum (Potato).